A 496-amino-acid polypeptide reads, in one-letter code: MLO-like protein 15 (496 aa).

Residues Met-1–Glu-9 are Extracellular-facing. Residues Tyr-10–Val-30 form a helical membrane-spanning segment. The Cytoplasmic portion of the chain corresponds to Glu-31–Glu-59. The chain crosses the membrane as a helical span at residues Leu-60–Ile-80. The Extracellular segment spans residues Cys-81–His-147. The chain crosses the membrane as a helical span at residues Ile-148 to Gly-168. The Cytoplasmic portion of the chain corresponds to Thr-169–Asp-269. The chain crosses the membrane as a helical span at residues Phe-270–Leu-290. A topological domain (extracellular) is located at residue Asn-291. The chain crosses the membrane as a helical span at residues Ile-292 to Val-312. Topologically, residues Gly-313–Val-355 are cytoplasmic. Residues Leu-356 to Ile-376 form a helical membrane-spanning segment. Residues Leu-377–Leu-397 lie on the Extracellular side of the membrane. The chain crosses the membrane as a helical span at residues Val-398 to Val-418. Over Thr-419 to Asp-496 the chain is Cytoplasmic. The interval Glu-432–Ala-453 is calmodulin-binding. The segment at Thr-454 to Asp-496 is disordered. The span at Gln-455 to Asn-485 shows a compositional bias: polar residues. Residues Pro-486–Asp-496 show a composition bias toward basic and acidic residues.

The protein belongs to the MLO family.

Its subcellular location is the membrane. Its function is as follows. May be involved in modulation of pathogen defense and leaf cell death. Activity seems to be regulated by Ca(2+)-dependent calmodulin binding and seems not to require heterotrimeric G proteins. In Arabidopsis thaliana (Mouse-ear cress), this protein is MLO-like protein 15 (MLO15).